Reading from the N-terminus, the 244-residue chain is Protein crossbronx (244 aa).

The region spanning 20 to 176 (QQEYKILAEY…VQKNIKESKD (157 aa)) is the UBC core domain.

Belongs to the ubiquitin-conjugating enzyme family. FTS subfamily.

The chain is Protein crossbronx (cbx) from Drosophila yakuba (Fruit fly).